Consider the following 265-residue polypeptide: Putative hydro-lyase Teth514_1597 (265 aa).

This sequence belongs to the D-glutamate cyclase family.

This Thermoanaerobacter sp. (strain X514) protein is Putative hydro-lyase Teth514_1597.